We begin with the raw amino-acid sequence, 382 residues long: Glycerate kinase (382 aa).

It belongs to the glycerate kinase type-1 family.

It catalyses the reaction (R)-glycerate + ATP = (2R)-3-phosphoglycerate + ADP + H(+). In Bacillus subtilis (strain 168), this protein is Glycerate kinase (glxK).